The following is a 322-amino-acid chain: Phosphate acetyltransferase (322 aa).

Belongs to the phosphate acetyltransferase and butyryltransferase family.

The protein resides in the cytoplasm. It carries out the reaction acetyl-CoA + phosphate = acetyl phosphate + CoA. It functions in the pathway metabolic intermediate biosynthesis; acetyl-CoA biosynthesis; acetyl-CoA from acetate: step 2/2. The polypeptide is Phosphate acetyltransferase (pta) (Mycoplasma capricolum subsp. capricolum (strain California kid / ATCC 27343 / NCTC 10154)).